The primary structure comprises 460 residues: Argininosuccinate lyase (460 aa).

The protein belongs to the lyase 1 family. Argininosuccinate lyase subfamily.

It localises to the cytoplasm. The enzyme catalyses 2-(N(omega)-L-arginino)succinate = fumarate + L-arginine. Its pathway is amino-acid biosynthesis; L-arginine biosynthesis; L-arginine from L-ornithine and carbamoyl phosphate: step 3/3. This Campylobacter jejuni (strain RM1221) protein is Argininosuccinate lyase.